The following is a 623-amino-acid chain: Membralin-like protein At1g60995 (623 aa).

Residues 24-44 traverse the membrane as a helical segment; it reads GFLEYTYLFVAITLFCILVVM. The segment at 99–119 is disordered; it reads SLEVSKTDQESSTSEENTDDT. 4 helical membrane passes run 315-335, 363-383, 392-412, and 424-444; these read GVLM…SFTL, IFVH…ILFF, LLAF…LISV, and FFLL…YGFS. Disordered regions lie at residues 506-567 and 602-623; these read NRTT…QAGA and EAQV…LSVD. A compositionally biased stretch (polar residues) spans 514–531; sequence PSGPNHTTPNQNTETRSF.

Belongs to the membralin family.

Its subcellular location is the membrane. The protein is Membralin-like protein At1g60995 of Arabidopsis thaliana (Mouse-ear cress).